A 130-amino-acid chain; its full sequence is Small ribosomal subunit protein uS9 (130 aa).

Belongs to the universal ribosomal protein uS9 family.

The polypeptide is Small ribosomal subunit protein uS9 (Pseudomonas fluorescens (strain ATCC BAA-477 / NRRL B-23932 / Pf-5)).